Here is a 71-residue protein sequence, read N- to C-terminus: Translational regulator CsrA (71 aa).

Residues 50-71 (RIRHEKDGDVPEAAPGQGADPQ) are disordered.

The protein belongs to the CsrA/RsmA family. Homodimer; the beta-strands of each monomer intercalate to form a hydrophobic core, while the alpha-helices form wings that extend away from the core.

It localises to the cytoplasm. Functionally, a key translational regulator that binds mRNA to regulate translation initiation and/or mRNA stability. Mediates global changes in gene expression, shifting from rapid growth to stress survival by linking envelope stress, the stringent response and the catabolite repression systems. Usually binds in the 5'-UTR; binding at or near the Shine-Dalgarno sequence prevents ribosome-binding, repressing translation, binding elsewhere in the 5'-UTR can activate translation and/or stabilize the mRNA. Its function is antagonized by small RNA(s). This is Translational regulator CsrA from Halorhodospira halophila (strain DSM 244 / SL1) (Ectothiorhodospira halophila (strain DSM 244 / SL1)).